The primary structure comprises 561 residues: MAEASQLFKEFKIQSVSEFFRRNAAMLGYTGKVRSLTTLVHEAVTNSLDACEEAGIPPYIRVEIEELGREHYKVVVEDNGPGIPEKYITHVFGKMLAGTKAHRNIQSRGQQGIGISGAVMFAQITSGKATRVITSTGDEIIEAWVKIDVDKNEGKIVKKEKHPNPDGWHGTRIELEVKNVKYMRSKQGVYWYLKLTAIANPHAHIELIEPDGKLIVFPRSSEEVPEPPVEMKPHPKGVLTDDVYRMAKKTKRQSVRRFLIGEFSRISDKKVDELIEYVAALRLIKKVGDKKVQEQLYERLMKGEVKAVLRSFRGYTKVVKQVAKMMEKPPEKLTWHEAEEIVEAFKYMKFLAPPTHGLRPIGEENIEKGLKGILKPEFVTAVTRPPKVYSGGIPFQVEVGLAYGGEIPSGFELLRYANRVPLLFDAGSCVTTQAARSIDWKRYKVDDLDRTPLVLMINVVSVHVPYTGTGKQSIASVDEIYNEIRLAIMDAARRLQTYLSGKHRRLYQVKRKKTFEKYVPEIARALSVLTGESEEKIREYFLNFIESHFASKEAVEVSENA.

ATP-binding positions include Asn46, Asp78, 99 to 100, 109 to 116, and Lys471; these read TK and GQQGIGIS.

It belongs to the TOP6B family. In terms of assembly, homodimer. Heterotetramer of two Top6A and two Top6B chains.

The enzyme catalyses ATP-dependent breakage, passage and rejoining of double-stranded DNA.. Its function is as follows. Relaxes both positive and negative superturns and exhibits a strong decatenase activity. The chain is Type 2 DNA topoisomerase 6 subunit B from Thermococcus gammatolerans (strain DSM 15229 / JCM 11827 / EJ3).